A 61-amino-acid chain; its full sequence is Small ribosomal subunit protein uS14 (61 aa).

Zn(2+) is bound by residues C24, C27, C40, and C43.

This sequence belongs to the universal ribosomal protein uS14 family. Zinc-binding uS14 subfamily. As to quaternary structure, part of the 30S ribosomal subunit. Contacts proteins S3 and S10. It depends on Zn(2+) as a cofactor.

Binds 16S rRNA, required for the assembly of 30S particles and may also be responsible for determining the conformation of the 16S rRNA at the A site. This Desulfosudis oleivorans (strain DSM 6200 / JCM 39069 / Hxd3) (Desulfococcus oleovorans) protein is Small ribosomal subunit protein uS14.